A 235-amino-acid chain; its full sequence is Small ribosomal subunit protein eS4 (235 aa).

Positions 37 to 110 (LPLGLIIRDV…KGRLVLYKLN (74 aa)) constitute an S4 RNA-binding domain.

The protein belongs to the eukaryotic ribosomal protein eS4 family.

The protein is Small ribosomal subunit protein eS4 of Methanosarcina mazei (strain ATCC BAA-159 / DSM 3647 / Goe1 / Go1 / JCM 11833 / OCM 88) (Methanosarcina frisia).